Consider the following 271-residue polypeptide: Putative mitochondrial carrier protein PET8 (271 aa).

Solcar repeat units lie at residues serine 3–glutamine 76, alanine 91–lysine 177, and valine 187–leucine 270. The next 6 membrane-spanning stretches (helical) occupy residues leucine 6–isoleucine 26, glycine 51–aspartate 71, methionine 97–isoleucine 117, glycine 152–phenylalanine 168, alanine 193–leucine 213, and methionine 251–phenylalanine 271.

It belongs to the mitochondrial carrier (TC 2.A.29) family.

It is found in the mitochondrion inner membrane. This is Putative mitochondrial carrier protein PET8 (PET8) from Eremothecium gossypii (strain ATCC 10895 / CBS 109.51 / FGSC 9923 / NRRL Y-1056) (Yeast).